Here is a 414-residue protein sequence, read N- to C-terminus: MATQRASGLLQRLAQGSLVKQILVGLILGILLAWISKPAAEAVGLLGTLFVGALKAVAPVLVLMLVMASIANHQHGQKTNIRPILFLYLLGTFSAALAAVVFSFAFPSTLHLSSSAQDIVPPSGIVEVLRGLLMSMVSNPIDALLNANYIGILVWAVGLGFALRHGNETTKNLVNDMSNAVTFMVKLVIRFAPVGIFGLVSSTLATTGFSTLWGYAHLLVVLIGCMLLVALVVNPLLVFWKIRRNPYPLVFACLRESGVYAFFTRSSAANIPVNMALCEKLNLDRDTYSVSIPLGATINMAGAAITITVLTLAAVHTLGVPVDLPTALLLSVVASLCACGASGVAGGSLLLIPLACNMFGIPNDIAMQVVAVGFIIGVLQDSCETALNSSTDVLFTAAACQAEDERLANNALRS.

8 consecutive transmembrane segments (helical) span residues Gly16–Ser36, Leu46–Val66, Ile84–Phe104, Ala143–Leu163, Ala180–Val200, Leu219–Phe239, Met300–Val320, and Val332–Ile352.

This sequence belongs to the dicarboxylate/amino acid:cation symporter (DAACS) (TC 2.A.23) family.

The protein localises to the cell inner membrane. The catalysed reaction is L-serine(in) + Na(+)(in) = L-serine(out) + Na(+)(out). It carries out the reaction L-threonine(in) + Na(+)(in) = L-threonine(out) + Na(+)(out). Its function is as follows. Involved in the import of serine and threonine into the cell, with the concomitant import of sodium (symport system). This chain is Serine/threonine transporter SstT, found in Salmonella dublin (strain CT_02021853).